The sequence spans 322 residues: MNPLTKVKLINELNEREVQLGVADKVSWHSEYKDSAWIFLGGLPYELTEGDIICVFSQYGEIVNINLVRDKKTGKSKGFCFLCYEDQRSTILAVDNFNGIKIKGRTIRVDHVSNYRAPKDSEEIDDVTRQLQEKGCGARTPSPSLSESSEDEKPTKKHKKDKKEKKKKKKEKEKADREVQAEQPSSSSPRRKTVKEKDDTGPKKHSSKNSERAQKSEPREGQKLPKSRTAYSGGAEDLERELKKEKPKHEHKSSSRREAREEKTRIRDRGRSSDAHSSWYNGRSEGRSYRSRSRSRDKSHRHKRARRSRERESSNPSDRWRH.

A Glycyl lysine isopeptide (Lys-Gly) (interchain with G-Cter in SUMO2) cross-link involves residue K8. The RRM domain maps to 36–114 (AWIFLGGLPY…RTIRVDHVSN (79 aa)). Positions 134–322 (KGCGARTPSP…SSNPSDRWRH (189 aa)) are disordered. T140 carries the phosphothreonine modification. Phosphoserine is present on S149. Over residues 155–171 (TKKHKKDKKEKKKKKKE) the composition is skewed to basic residues. Phosphoserine is present on residues S186 and S188. Positions 195–223 (KEKDDTGPKKHSSKNSERAQKSEPREGQK) are enriched in basic and acidic residues. S232 is modified (phosphoserine). The span at 240–274 (RELKKEKPKHEHKSSSRREAREEKTRIRDRGRSSD) shows a compositional bias: basic and acidic residues. Residue K243 forms a Glycyl lysine isopeptide (Lys-Gly) (interchain with G-Cter in SUMO2) linkage. S272 is modified (phosphoserine). Basic residues predominate over residues 289 to 308 (YRSRSRSRDKSHRHKRARRS). S314 carries the phosphoserine modification.

The protein belongs to the IST3 family. In terms of assembly, part of the activated spliceosome B/catalytic step 1 spliceosome, one of the forms of the spliceosome which has a well-formed active site but still cannot catalyze the branching reaction and is composed of at least 52 proteins, the U2, U5 and U6 snRNAs and the pre-mRNA. Component of the minor spliceosome, which splices U12-type introns.

It is found in the nucleus. Functionally, involved in pre-mRNA splicing as component of the activated spliceosome. As a component of the minor spliceosome, involved in the splicing of U12-type introns in pre-mRNAs. The polypeptide is RNA-binding motif protein, X-linked 2 (RBMX2) (Homo sapiens (Human)).